A 207-amino-acid chain; its full sequence is MTRPMLEALDLAGVRGERRLFDHLTFRIVPGECLSVHGENGSGKTTLLRTLAGFATPAAGRVLWKGKPLRNQWSEYQRELVYNGHGIGLKEDLNALDNLLAAAAIAGEPVTTECVESALDEVGLAEHRHLPFRMLSQGQKRRASLARLLLYRRKLWILDEPSTALDQFGARWLGELIHRHQSRGGMVVLTSHQELALKTSQTVRMGA.

The region spanning 6–207 (LEALDLAGVR…KTSQTVRMGA (202 aa)) is the ABC transporter domain. 38–45 (GENGSGKT) lines the ATP pocket.

Belongs to the ABC transporter superfamily. CcmA exporter (TC 3.A.1.107) family. In terms of assembly, the complex is composed of two ATP-binding proteins (CcmA) and two transmembrane proteins (CcmB).

It is found in the cell inner membrane. The enzyme catalyses heme b(in) + ATP + H2O = heme b(out) + ADP + phosphate + H(+). Part of the ABC transporter complex CcmAB involved in the biogenesis of c-type cytochromes; once thought to export heme, this seems not to be the case, but its exact role is uncertain. Responsible for energy coupling to the transport system. This chain is Cytochrome c biogenesis ATP-binding export protein CcmA 1, found in Cupriavidus metallidurans (strain ATCC 43123 / DSM 2839 / NBRC 102507 / CH34) (Ralstonia metallidurans).